Here is a 593-residue protein sequence, read N- to C-terminus: NADH-quinone oxidoreductase subunit C/D (593 aa).

Residues 1-184 (MTADSALYIP…DPYSLSAAKQ (184 aa)) form an NADH dehydrogenase I subunit C region. The segment at 208–593 (DYMFLNLGPN…IDFVMADVDR (386 aa)) is NADH dehydrogenase I subunit D.

This sequence in the N-terminal section; belongs to the complex I 30 kDa subunit family. In the C-terminal section; belongs to the complex I 49 kDa subunit family. As to quaternary structure, NDH-1 is composed of 13 different subunits. Subunits NuoB, CD, E, F, and G constitute the peripheral sector of the complex.

Its subcellular location is the cell inner membrane. The catalysed reaction is a quinone + NADH + 5 H(+)(in) = a quinol + NAD(+) + 4 H(+)(out). Its function is as follows. NDH-1 shuttles electrons from NADH, via FMN and iron-sulfur (Fe-S) centers, to quinones in the respiratory chain. The immediate electron acceptor for the enzyme in this species is believed to be ubiquinone. Couples the redox reaction to proton translocation (for every two electrons transferred, four hydrogen ions are translocated across the cytoplasmic membrane), and thus conserves the redox energy in a proton gradient. This Pseudomonas aeruginosa (strain UCBPP-PA14) protein is NADH-quinone oxidoreductase subunit C/D.